Reading from the N-terminus, the 86-residue chain is Cell division topological specificity factor (86 aa).

Belongs to the MinE family.

Its function is as follows. Prevents the cell division inhibition by proteins MinC and MinD at internal division sites while permitting inhibition at polar sites. This ensures cell division at the proper site by restricting the formation of a division septum at the midpoint of the long axis of the cell. This chain is Cell division topological specificity factor, found in Rhizobium etli (strain ATCC 51251 / DSM 11541 / JCM 21823 / NBRC 15573 / CFN 42).